The chain runs to 130 residues: Cytochrome c-type biogenesis protein CcmE (130 aa).

Over 1–7 (MKKKHKR) the chain is Cytoplasmic. The helical; Signal-anchor for type II membrane protein transmembrane segment at 8-28 (LLITSGIFCFLSCAVFFILTT) threads the bilayer. Residues 29–130 (LKENISFFYT…DENYKPKVLK (102 aa)) are Extracellular-facing. Residues His120 and Tyr124 each coordinate heme.

It belongs to the CcmE/CycJ family.

Its subcellular location is the cell membrane. In terms of biological role, heme chaperone required for the biogenesis of c-type cytochromes. Transiently binds heme delivered by CcmC and transfers the heme to apo-cytochromes in a process facilitated by CcmF and CcmH. This chain is Cytochrome c-type biogenesis protein CcmE, found in Wolbachia pipientis subsp. Culex pipiens (strain wPip).